A 295-amino-acid polypeptide reads, in one-letter code: Bifunctional protein FolD (295 aa).

NADP(+) contacts are provided by residues 166–168 (GRS), serine 195, and isoleucine 236.

This sequence belongs to the tetrahydrofolate dehydrogenase/cyclohydrolase family. In terms of assembly, homodimer.

It carries out the reaction (6R)-5,10-methylene-5,6,7,8-tetrahydrofolate + NADP(+) = (6R)-5,10-methenyltetrahydrofolate + NADPH. The enzyme catalyses (6R)-5,10-methenyltetrahydrofolate + H2O = (6R)-10-formyltetrahydrofolate + H(+). It functions in the pathway one-carbon metabolism; tetrahydrofolate interconversion. In terms of biological role, catalyzes the oxidation of 5,10-methylenetetrahydrofolate to 5,10-methenyltetrahydrofolate and then the hydrolysis of 5,10-methenyltetrahydrofolate to 10-formyltetrahydrofolate. This chain is Bifunctional protein FolD, found in Chlorobium phaeobacteroides (strain DSM 266 / SMG 266 / 2430).